The chain runs to 388 residues: 1-deoxy-D-xylulose 5-phosphate reductoisomerase (388 aa).

Thr15, Gly16, Ser17, Ile18, and Asn127 together coordinate NADPH. Lys128 lines the 1-deoxy-D-xylulose 5-phosphate pocket. Glu129 is an NADPH binding site. Mn(2+) is bound at residue Asp153. Residues Ser154, Glu155, Ser179, and His202 each contribute to the 1-deoxy-D-xylulose 5-phosphate site. Residue Glu155 participates in Mn(2+) binding. Gly208 provides a ligand contact to NADPH. 4 residues coordinate 1-deoxy-D-xylulose 5-phosphate: Ser215, Asn220, Lys221, and Glu224. Residue Glu224 coordinates Mn(2+).

The protein belongs to the DXR family. The cofactor is Mg(2+). It depends on Mn(2+) as a cofactor.

The enzyme catalyses 2-C-methyl-D-erythritol 4-phosphate + NADP(+) = 1-deoxy-D-xylulose 5-phosphate + NADPH + H(+). It participates in isoprenoid biosynthesis; isopentenyl diphosphate biosynthesis via DXP pathway; isopentenyl diphosphate from 1-deoxy-D-xylulose 5-phosphate: step 1/6. Functionally, catalyzes the NADPH-dependent rearrangement and reduction of 1-deoxy-D-xylulose-5-phosphate (DXP) to 2-C-methyl-D-erythritol 4-phosphate (MEP). This chain is 1-deoxy-D-xylulose 5-phosphate reductoisomerase, found in Bacteroides fragilis (strain YCH46).